The primary structure comprises 171 residues: UPF0763 protein HPSH_03535 (171 aa).

It belongs to the UPF0763 family.

The polypeptide is UPF0763 protein HPSH_03535 (Helicobacter pylori (strain Shi470)).